Reading from the N-terminus, the 211-residue chain is Protein crossbronx-like (211 aa).

One can recognise a UBC core domain in the interval 17 to 177 (NQGYQILAEY…VRNSILWSCK (161 aa)).

It belongs to the ubiquitin-conjugating enzyme family. FTS subfamily.

The sequence is that of Protein crossbronx-like from Drosophila grimshawi (Hawaiian fruit fly).